Consider the following 472-residue polypeptide: Argininosuccinate lyase (472 aa).

It belongs to the lyase 1 family. Argininosuccinate lyase subfamily.

The protein localises to the cytoplasm. The enzyme catalyses 2-(N(omega)-L-arginino)succinate = fumarate + L-arginine. It functions in the pathway amino-acid biosynthesis; L-arginine biosynthesis; L-arginine from L-ornithine and carbamoyl phosphate: step 3/3. This chain is Argininosuccinate lyase, found in Rhodococcus jostii (strain RHA1).